We begin with the raw amino-acid sequence, 437 residues long: GTPase Obg (437 aa).

One can recognise an Obg domain in the interval 2–160 (SMFLDTAKIS…RQLELELKIL (159 aa)). The 178-residue stretch at 161–338 (ADVGLVGFPS…LLEATAELLA (178 aa)) folds into the OBG-type G domain. Residues 167–174 (GFPSVGKS), 192–196 (FTTIV), 214–217 (DLPG), 284–287 (NKMD), and 319–321 (SSL) each bind GTP. Positions 174 and 194 each coordinate Mg(2+). An OCT domain is found at 359 to 437 (GFAETEKDFE…IGKFEFEFVD (79 aa)).

This sequence belongs to the TRAFAC class OBG-HflX-like GTPase superfamily. OBG GTPase family. In terms of assembly, monomer. Mg(2+) is required as a cofactor.

The protein resides in the cytoplasm. An essential GTPase which binds GTP, GDP and possibly (p)ppGpp with moderate affinity, with high nucleotide exchange rates and a fairly low GTP hydrolysis rate. Plays a role in control of the cell cycle, stress response, ribosome biogenesis and in those bacteria that undergo differentiation, in morphogenesis control. The sequence is that of GTPase Obg from Streptococcus pyogenes serotype M5 (strain Manfredo).